A 144-amino-acid chain; its full sequence is Large ribosomal subunit protein uL11 (144 aa).

It belongs to the universal ribosomal protein uL11 family. As to quaternary structure, part of the ribosomal stalk of the 50S ribosomal subunit. Interacts with L10 and the large rRNA to form the base of the stalk. L10 forms an elongated spine to which L12 dimers bind in a sequential fashion forming a multimeric L10(L12)X complex. Post-translationally, one or more lysine residues are methylated.

Forms part of the ribosomal stalk which helps the ribosome interact with GTP-bound translation factors. This Parafrankia sp. (strain EAN1pec) protein is Large ribosomal subunit protein uL11.